Here is a 304-residue protein sequence, read N- to C-terminus: HTH-type transcriptional regulator TtuA (304 aa).

The region spanning 1-58 (MELEQLKCFVAAAEELHFGRAAQKMGILPASLGRHLRLLEESLGTRLMSRTTRSVALT) is the HTH lysR-type domain. The H-T-H motif DNA-binding region spans 18–37 (FGRAAQKMGILPASLGRHLR).

The protein belongs to the LysR transcriptional regulatory family.

Transcriptional regulator of the ttuABCDE tartrate utilization operon. This chain is HTH-type transcriptional regulator TtuA (ttuA), found in Agrobacterium vitis (Rhizobium vitis).